A 471-amino-acid chain; its full sequence is UDP-N-acetylmuramate--L-alanine ligase (471 aa).

An ATP-binding site is contributed by 114 to 120 (GTHGKTT).

It belongs to the MurCDEF family.

It is found in the cytoplasm. It carries out the reaction UDP-N-acetyl-alpha-D-muramate + L-alanine + ATP = UDP-N-acetyl-alpha-D-muramoyl-L-alanine + ADP + phosphate + H(+). Its pathway is cell wall biogenesis; peptidoglycan biosynthesis. In terms of biological role, cell wall formation. The chain is UDP-N-acetylmuramate--L-alanine ligase from Rhizobium etli (strain ATCC 51251 / DSM 11541 / JCM 21823 / NBRC 15573 / CFN 42).